We begin with the raw amino-acid sequence, 287 residues long: ATP synthase gamma chain (287 aa).

Belongs to the ATPase gamma chain family. In terms of assembly, F-type ATPases have 2 components, CF(1) - the catalytic core - and CF(0) - the membrane proton channel. CF(1) has five subunits: alpha(3), beta(3), gamma(1), delta(1), epsilon(1). CF(0) has three main subunits: a, b and c.

The protein resides in the cell inner membrane. Its function is as follows. Produces ATP from ADP in the presence of a proton gradient across the membrane. The gamma chain is believed to be important in regulating ATPase activity and the flow of protons through the CF(0) complex. This chain is ATP synthase gamma chain, found in Edwardsiella ictaluri (strain 93-146).